The chain runs to 123 residues: ATP synthase epsilon chain (123 aa).

This sequence belongs to the ATPase epsilon chain family. As to quaternary structure, F-type ATPases have 2 components, CF(1) - the catalytic core - and CF(0) - the membrane proton channel. CF(1) has five subunits: alpha(3), beta(3), gamma(1), delta(1), epsilon(1). CF(0) has three main subunits: a, b and c.

The protein localises to the cell inner membrane. Produces ATP from ADP in the presence of a proton gradient across the membrane. The chain is ATP synthase epsilon chain from Helicobacter acinonychis (strain Sheeba).